We begin with the raw amino-acid sequence, 198 residues long: Putative undecaprenyl-diphosphatase YbjG (198 aa).

At 1–27 (MLENLNLSLFSLINATPDSAPWMISLA) the chain is on the cytoplasmic side. Residues 28–48 (IFIAKDLITVVPLLAVVLWLW) traverse the membrane as a helical segment. Residues 49–57 (GLTAQRQLV) are Periplasmic-facing. Residues 58–78 (IKIAIALAVSLFVSWTMGHLF) traverse the membrane as a helical segment. At 79 to 120 (PHDRPFVENIGYNFLHHAADDSFPSDHGTVIFTFALAFLCWH) the chain is on the cytoplasmic side. The helical transmembrane segment at 121 to 143 (RLWSGSLLMVLAVVIAWSRVYLG) threads the bilayer. The Periplasmic portion of the chain corresponds to 144-149 (VHWPLD). A helical transmembrane segment spans residues 150–172 (MLGGLLAGMIGCLSAQIIWQAMG). At 173–198 (HKLYQRLQSWYRVCFALPIRKGWVRD) the chain is on the cytoplasmic side.

It belongs to the BcrC/YbjG family.

Its subcellular location is the cell inner membrane. The enzyme catalyses di-trans,octa-cis-undecaprenyl diphosphate + H2O = di-trans,octa-cis-undecaprenyl phosphate + phosphate + H(+). Overexpression leads to increased undecaprenyl diphosphatase activity and to increased resistance to bacitracin. May have a preferred substrate other than undecaprenyl diphosphate in vivo. The sequence is that of Putative undecaprenyl-diphosphatase YbjG (ybjG) from Escherichia coli (strain K12).